Here is a 128-residue protein sequence, read N- to C-terminus: Cytochrome c-type biogenesis protein CcmE (128 aa).

Over 1–8 the chain is Cytoplasmic; that stretch reads MQKIVRNR. A helical; Signal-anchor for type II membrane protein transmembrane segment spans residues 9 to 29; that stretch reads LIKIILCFCSTCLGISIILYN. The Periplasmic segment spans residues 30–128; that stretch reads LEKNIIFFFP…KHDENYRPPS (99 aa). Residues histidine 120 and tyrosine 124 each contribute to the heme site.

It belongs to the CcmE/CycJ family.

The protein resides in the cell inner membrane. Functionally, heme chaperone required for the biogenesis of c-type cytochromes. Transiently binds heme delivered by CcmC and transfers the heme to apo-cytochromes in a process facilitated by CcmF and CcmH. This Rickettsia typhi (strain ATCC VR-144 / Wilmington) protein is Cytochrome c-type biogenesis protein CcmE.